The following is a 247-amino-acid chain: Neurotrophic factor BDNF precursor form (247 aa).

Residues 1 to 18 (MTILFLTMVISYFGCMKA) form the signal peptide. Positions 19 to 128 (APMKEANIRG…AANMSMRVRR (110 aa)) are excised as a propeptide. A glycan (N-linked (GlcNAc...) asparagine) is linked at asparagine 121. Cystine bridges form between cysteine 141–cysteine 208, cysteine 186–cysteine 237, and cysteine 196–cysteine 239.

Belongs to the NGF-beta family. Monomers and homodimers. Binds to NTRK2/TRKB. Can form heterodimers with other neurotrophin family members, such as NTF3 and NTF4 (in vitro), but the physiological relevance of this is not clear. BDNF precursor form: interacts with the heterodimer formed by NGFR and SORCS2. In terms of processing, N-glycosylated and glycosulfated, contrary to mature BDNF. Post-translationally, mature BDNF is produced by proteolytic removal of the propeptide, catalyzed by a FURIN family member. In addition, the precursor form is proteolytically cleaved within the propeptide, but this is not an obligatory intermediate for the production of mature BDNF. Can be converted into mature BDNF by plasmin (PLG). As to expression, detected in blood plasma and in saliva (at protein level). Brain. Highly expressed in hippocampus, amygdala, cerebral cortex and cerebellum. Also expressed in heart, lung, skeletal muscle, testis, prostate and placenta.

The protein localises to the secreted. Important signaling molecule that activates signaling cascades downstream of NTRK2. During development, promotes the survival and differentiation of selected neuronal populations of the peripheral and central nervous systems. Participates in axonal growth, pathfinding and in the modulation of dendritic growth and morphology. Major regulator of synaptic transmission and plasticity at adult synapses in many regions of the CNS. The versatility of BDNF is emphasized by its contribution to a range of adaptive neuronal responses including long-term potentiation (LTP), long-term depression (LTD), certain forms of short-term synaptic plasticity, as well as homeostatic regulation of intrinsic neuronal excitability. Its function is as follows. Important signaling molecule that activates signaling cascades downstream of NTRK2. Activates signaling cascades via the heterodimeric receptor formed by NGFR and SORCS2. Signaling via NGFR and SORCS2 plays a role in synaptic plasticity and long-term depression (LTD). Binding to NGFR and SORCS2 promotes neuronal apoptosis. Promotes neuronal growth cone collapse. The polypeptide is Neurotrophic factor BDNF precursor form (Homo sapiens (Human)).